A 231-amino-acid chain; its full sequence is Uracil-DNA glycosylase (231 aa).

Aspartate 74 functions as the Proton acceptor in the catalytic mechanism.

The protein belongs to the uracil-DNA glycosylase (UDG) superfamily. UNG family.

The protein resides in the cytoplasm. The catalysed reaction is Hydrolyzes single-stranded DNA or mismatched double-stranded DNA and polynucleotides, releasing free uracil.. Functionally, excises uracil residues from the DNA which can arise as a result of misincorporation of dUMP residues by DNA polymerase or due to deamination of cytosine. In Campylobacter jejuni subsp. jejuni serotype O:6 (strain 81116 / NCTC 11828), this protein is Uracil-DNA glycosylase.